A 490-amino-acid polypeptide reads, in one-letter code: GTPase Der (490 aa).

2 EngA-type G domains span residues 3–166 and 196–369; these read PVIA…PKDE and IKIA…KSAV. GTP-binding positions include 9-16, 56-60, 118-121, 202-209, 249-253, and 314-317; these read GRPNVGKS, DTGGI, NKID, DTAGV, and NKWD. Residues 370-454 form the KH-like domain; the sequence is TRWPTSRLTQ…PIRIEFKGGE (85 aa). The tract at residues 452 to 490 is disordered; sequence GGENPYEGNKNTLTDRQVNKKRRMMSHHKKADKKRRDKR. Basic residues predominate over residues 470-490; it reads NKKRRMMSHHKKADKKRRDKR.

The protein belongs to the TRAFAC class TrmE-Era-EngA-EngB-Septin-like GTPase superfamily. EngA (Der) GTPase family. In terms of assembly, associates with the 50S ribosomal subunit.

Functionally, GTPase that plays an essential role in the late steps of ribosome biogenesis. This Pseudomonas savastanoi pv. phaseolicola (strain 1448A / Race 6) (Pseudomonas syringae pv. phaseolicola (strain 1448A / Race 6)) protein is GTPase Der.